Consider the following 287-residue polypeptide: Bifunctional protein FolD (287 aa).

NADP(+)-binding positions include 160–162 (GRS), serine 189, and threonine 230.

It belongs to the tetrahydrofolate dehydrogenase/cyclohydrolase family. In terms of assembly, homodimer.

The enzyme catalyses (6R)-5,10-methylene-5,6,7,8-tetrahydrofolate + NADP(+) = (6R)-5,10-methenyltetrahydrofolate + NADPH. It catalyses the reaction (6R)-5,10-methenyltetrahydrofolate + H2O = (6R)-10-formyltetrahydrofolate + H(+). Its pathway is one-carbon metabolism; tetrahydrofolate interconversion. Its function is as follows. Catalyzes the oxidation of 5,10-methylenetetrahydrofolate to 5,10-methenyltetrahydrofolate and then the hydrolysis of 5,10-methenyltetrahydrofolate to 10-formyltetrahydrofolate. The chain is Bifunctional protein FolD from Chlamydia abortus (strain DSM 27085 / S26/3) (Chlamydophila abortus).